The chain runs to 484 residues: E-selectin (484 aa).

The signal sequence occupies residues 1–22; the sequence is MIASQFLSALPLVLLLLRESGA. Positions 23 to 140 constitute a C-type lectin domain; sequence WSYSASTETM…CSKKKLALCY (118 aa). Topologically, residues 23–429 are extracellular; the sequence is WSYSASTETM…CEAPAESKIP (407 aa). 14 disulfide bridges follow: C41–C139, C112–C131, C144–C155, C149–C164, C166–C175, C181–C222, C194–C204, C208–C235, C240–C285, C271–C298, C303–C348, C334–C361, C366–C407, and C393–C420. N-linked (GlcNAc...) asparagine glycans are attached at residues N61, N65, and N79. Ca(2+) is bound by residues E102, N104, and E110. Residues 102–110, 114–119, and 127–129 contribute to the a carbohydrate site; these read EPNNKQSNE, EIYIKR, and NDE. Residues N127 and D128 each contribute to the Ca(2+) site. Residues 141–176 enclose the EGF-like domain; sequence TAACTPTSCSGHGECIETINSSTCQCYPGFRGLQCE. N-linked (GlcNAc...) asparagine glycosylation is present at N160. Sushi domains lie at 179–237, 251–300, 301–363, and 364–422; these read VECD…TCKA, VSCN…VCKA, VKCP…SCQV, and VQCS…TCEA. N-linked (GlcNAc...) asparagine glycosylation is present at N201. N254 is a glycosylation site (N-linked (GlcNAc...) asparagine). 2 N-linked (GlcNAc...) asparagine glycosylation sites follow: N376 and N400. The chain crosses the membrane as a helical span at residues 430–451; the sequence is LAMGLAAGGVSFMTSASFLLWL. The Cytoplasmic segment spans residues 452–484; sequence LKRLRKRAKKFVPSSSSECLQPNGSYQMPSDLI.

This sequence belongs to the selectin/LECAM family. As to quaternary structure, interacts with SELPLG/PSGL1 and PODXL2 through the sialyl Lewis X epitope. SELPLG sulfation appears not to be required for this interaction.

The protein resides in the cell membrane. Cell-surface glycoprotein having a role in immunoadhesion. Mediates in the adhesion of blood neutrophils in cytokine-activated endothelium through interaction with SELPLG/PSGL1. May have a role in capillary morphogenesis. This is E-selectin (SELE) from Sus scrofa (Pig).